Here is a 253-residue protein sequence, read N- to C-terminus: Aminoglycoside nucleotidyltransferase (4') (253 aa).

The tract at residues 1-127 (MNGPIIMTRE…KVYQTAKSVE (127 aa)) is N-terminal domain. Residues Ser-39, Arg-42, Ser-49, Asp-50, and Glu-52 each contribute to the ATP site. Mg(2+) contacts are provided by Asp-50 and Glu-52. Residues Glu-52 and Glu-67 each coordinate neomycin B. 5 residues coordinate kanamycin A: Glu-67, Lys-74, Glu-76, Glu-141, and Glu-145. The interval 128 to 241 (AQTFHDAICA…NGIQEWTERH (114 aa)) is C-terminal domain. 3 residues coordinate ATP: Glu-145, Lys-149, and Thr-187. A Mg(2+)-binding site is contributed by Glu-145. Glu-145 functions as the Proton acceptor in the catalytic mechanism.

In terms of assembly, homodimer. Mg(2+) is required as a cofactor.

It catalyses the reaction amikacin + ATP = 4'-adenylylamikacin + diphosphate. The enzyme catalyses kanamycin A + ATP = 4'-adenylylkanamycin A + diphosphate. It carries out the reaction neomycin B + ATP = 4'-adenylylneomycin B + diphosphate. The catalysed reaction is paromomycin + ATP = 4'-adenylylparomomycin + diphosphate. It catalyses the reaction ribostamycin + ATP = 4'-adenylylribostamycin + diphosphate. The enzyme catalyses tobramycin + ATP = 4'-adenylyltobramycin + diphosphate. It carries out the reaction kanamycin A + CTP = 4'-cytidylylkanamycin A + diphosphate. The catalysed reaction is kanamycin A + GTP = 4'-guanylylkanamycin A + diphosphate. It catalyses the reaction kanamycin A + ITP = 4'-inosinylylkanamycin A + diphosphate. The enzyme catalyses dTTP + kanamycin A = 4'-thymidylylkanamycin A + diphosphate. It carries out the reaction kanamycin A + UTP = 4'-uridylylkanamycin A + diphosphate. The catalysed reaction is kanamycin A + dATP = 4'-(2'-deoxyadenylyl)kanamycin A + diphosphate. It catalyses the reaction kanamycin A + dCTP = 4'-(2'-deoxycytidylyl)kanamycin A + diphosphate. The enzyme catalyses kanamycin A + dGTP = 4'-(2'-deoxyguanylyl)kanamycin A + diphosphate. It carries out the reaction dUTP + kanamycin A = 4'-(2'-deoxyuridylyl)kanamycin A + diphosphate. The catalysed reaction is amikacin + GTP = 4'-guanylylamikacin + diphosphate. It catalyses the reaction amikacin + ITP = 4'-inosinylylamikacin + diphosphate. The enzyme catalyses amikacin + CTP = 4'-cytidylylamikacin + diphosphate. It carries out the reaction amikacin + UTP = 4'-uridylylamikacin + diphosphate. The catalysed reaction is amikacin + dTTP = 4'-thymidylylamikacin + diphosphate. In terms of biological role, inactivates aminoglycoside antibiotics such as kanamycin by catalyzing the transfer of a nucleotidyl group from a wide variety of nucleoside triphosphates ((d)ATP, (d)CTP, (d)GTP, ITP, TTP and (d)UTP) to the 4'-hydroxyl group of the aminoglycoside. In vitro, antibiotics without the 4'-hydroxyl but possessing a 4''-hydroxyl group (e.g. sisomicin and gentamicin) are also modifed but with poor specificity. The 3' position of the NTP ribose ring does not tolerate large substitutions (e.g. ddATP) and dNTPs and TTP are better substrates than their NTP counterparts. A short (2.35 Angstrom) hydrogen bond initially facilitates tight binding of the substrate (between Glu-52 and antibiotic) that is subsequently disrupted by the assembly of the active ternary complex. This enables the release of products post-catalysis, a 'catch and release' mechanism. This is Aminoglycoside nucleotidyltransferase (4') (knt) from Staphylococcus aureus.